The sequence spans 89 residues: Conotoxin Lt6.4 (89 aa).

The N-terminal stretch at 1 to 22 is a signal peptide; that stretch reads MKLTCVPIVAMLFLMACQLITA. The propeptide occupies 23–50; that stretch reads DYSREKHGYSAEKSSDKIQDSFYSKLTK. 3 cysteine pairs are disulfide-bonded: Cys52–Cys67, Cys59–Cys71, and Cys66–Cys80.

Belongs to the conotoxin O1 superfamily. Expressed by the venom duct.

The protein resides in the secreted. The protein is Conotoxin Lt6.4 of Conus litteratus (Lettered cone).